We begin with the raw amino-acid sequence, 599 residues long: Aspartate--tRNA ligase (599 aa).

Position 180 (glutamate 180) interacts with L-aspartate. Positions 204–207 (QIFK) are aspartate. Residue arginine 226 participates in L-aspartate binding. Residues 226-228 (RDE) and glutamine 235 contribute to the ATP site. Histidine 454 provides a ligand contact to L-aspartate. Glutamate 488 contributes to the ATP binding site. Arginine 495 provides a ligand contact to L-aspartate. Position 540-543 (540-543 (GLDR)) interacts with ATP.

The protein belongs to the class-II aminoacyl-tRNA synthetase family. Type 1 subfamily. In terms of assembly, homodimer.

Its subcellular location is the cytoplasm. The catalysed reaction is tRNA(Asp) + L-aspartate + ATP = L-aspartyl-tRNA(Asp) + AMP + diphosphate. Functionally, catalyzes the attachment of L-aspartate to tRNA(Asp) in a two-step reaction: L-aspartate is first activated by ATP to form Asp-AMP and then transferred to the acceptor end of tRNA(Asp). The sequence is that of Aspartate--tRNA ligase from Clostridium botulinum (strain Alaska E43 / Type E3).